The sequence spans 251 residues: Ribonuclease 3 (251 aa).

Positions 3 to 125 (LATLETRLGH…LFGAVFLDAG (123 aa)) constitute an RNase III domain. A Mg(2+)-binding site is contributed by Glu38. Asp42 is a catalytic residue. Mg(2+) is bound by residues Asp111 and Glu114. Residue Glu114 is part of the active site. In terms of domain architecture, DRBM spans 152–222 (DAKTLLQEFL…AKLALEAALV (71 aa)).

This sequence belongs to the ribonuclease III family. As to quaternary structure, homodimer. Mg(2+) serves as cofactor.

The protein resides in the cytoplasm. The enzyme catalyses Endonucleolytic cleavage to 5'-phosphomonoester.. Its function is as follows. Digests double-stranded RNA. Involved in the processing of primary rRNA transcript to yield the immediate precursors to the large and small rRNAs (23S and 16S). Processes some mRNAs, and tRNAs when they are encoded in the rRNA operon. Processes pre-crRNA and tracrRNA of type II CRISPR loci if present in the organism. The chain is Ribonuclease 3 from Bordetella avium (strain 197N).